Reading from the N-terminus, the 322-residue chain is Fructose-1,6-bisphosphatase class 1 3 (322 aa).

Mg(2+)-binding residues include glutamate 84, aspartate 103, leucine 105, and aspartate 106. Residues aspartate 106–serine 109, asparagine 198, and lysine 262 each bind substrate. Glutamate 268 serves as a coordination point for Mg(2+).

This sequence belongs to the FBPase class 1 family. In terms of assembly, homotetramer. Mg(2+) serves as cofactor.

The protein localises to the cytoplasm. The catalysed reaction is beta-D-fructose 1,6-bisphosphate + H2O = beta-D-fructose 6-phosphate + phosphate. It functions in the pathway carbohydrate biosynthesis; gluconeogenesis. The protein is Fructose-1,6-bisphosphatase class 1 3 of Pseudoalteromonas translucida (strain TAC 125).